The following is a 347-amino-acid chain: Phosphoribosylformylglycinamidine cyclo-ligase (347 aa).

Belongs to the AIR synthase family.

Its subcellular location is the cytoplasm. It catalyses the reaction 2-formamido-N(1)-(5-O-phospho-beta-D-ribosyl)acetamidine + ATP = 5-amino-1-(5-phospho-beta-D-ribosyl)imidazole + ADP + phosphate + H(+). The protein operates within purine metabolism; IMP biosynthesis via de novo pathway; 5-amino-1-(5-phospho-D-ribosyl)imidazole from N(2)-formyl-N(1)-(5-phospho-D-ribosyl)glycinamide: step 2/2. This chain is Phosphoribosylformylglycinamidine cyclo-ligase, found in Yersinia pseudotuberculosis serotype O:1b (strain IP 31758).